A 160-amino-acid polypeptide reads, in one-letter code: Sec-independent protein translocase protein TatB (160 aa).

Residues 1–21 (MFGMGFFEILVVLIVAIIFLG) form a helical membrane-spanning segment. The segment at 118–160 (HLNEEVSNEEALNKEVSSDESPKEVQLTTDNNAKEHDKEKEHV) is disordered. Composition is skewed to basic and acidic residues over residues 128–140 (ALNK…ESPK) and 149–160 (NAKEHDKEKEHV).

Belongs to the TatB family. The Tat system comprises two distinct complexes: a TatABC complex, containing multiple copies of TatA, TatB and TatC subunits, and a separate TatA complex, containing only TatA subunits. Substrates initially bind to the TatABC complex, which probably triggers association of the separate TatA complex to form the active translocon.

It localises to the cell inner membrane. In terms of biological role, part of the twin-arginine translocation (Tat) system that transports large folded proteins containing a characteristic twin-arginine motif in their signal peptide across membranes. Together with TatC, TatB is part of a receptor directly interacting with Tat signal peptides. TatB may form an oligomeric binding site that transiently accommodates folded Tat precursor proteins before their translocation. In Helicobacter pylori (strain J99 / ATCC 700824) (Campylobacter pylori J99), this protein is Sec-independent protein translocase protein TatB.